Reading from the N-terminus, the 76-residue chain is uncharacterized protein (76 aa).

This is an uncharacterized protein from Ornithodoros (relapsing fever ticks).